We begin with the raw amino-acid sequence, 515 residues long: MSSVAITPGCVPLSGWRAILAGAAIRLDESCRPAIARAAEAVAAIVTRAEPVYGINTGFGKLATVRIDAADLATLQRNIVLSHAAGTGEPMPVAVARLMMALKLASLGQGASGVRPETVALLEAMLARGVTPLVPAQGSVGASGDLAPLAHMTAAMIGVGACIDEAGTRIPAAEALSRVGLEPLTLGPKEGLALLNGTQFSTAYALAGLFGAEDLLRAALVAGALSVDAARGSDTPFDPRIHALRRHRGQIETARALRDLLSGSAIRASHLVGDERVQDPYCLRCQPQVMGAALDLLRQAAATLETEANGVSDNPLVFPETGEALSGGNFHAEPVAFAADMIALALCEIGALSERRIALLVDPALSSGLPAFLTPRPGLNSGFMIPQVTAAALVSENKQRAHPASVDSIPTSANQEDHVSMAAHGARRLLPMVENAMAVIAIELLAAAQGCDFLAPLRSSEPLERVRARLRAAVPRLDEDRYFHPDLAAAAALVRGGAVVEAAGVGLPGVSGGVA.

The 5-imidazolinone (Ala-Gly) cross-link spans 142-144 (ASG). Serine 143 is modified (2,3-didehydroalanine (Ser)).

This sequence belongs to the PAL/histidase family. In terms of processing, contains an active site 4-methylidene-imidazol-5-one (MIO), which is formed autocatalytically by cyclization and dehydration of residues Ala-Ser-Gly.

Its subcellular location is the cytoplasm. The catalysed reaction is L-histidine = trans-urocanate + NH4(+). Its pathway is amino-acid degradation; L-histidine degradation into L-glutamate; N-formimidoyl-L-glutamate from L-histidine: step 1/3. This Methylobacterium nodulans (strain LMG 21967 / CNCM I-2342 / ORS 2060) protein is Histidine ammonia-lyase.